The chain runs to 275 residues: Translation initiation factor 2 subunit alpha (275 aa).

Residues 12-83 (GEFVIATVKS…NKGHIDLSLK (72 aa)) enclose the S1 motif domain.

The protein belongs to the eIF-2-alpha family. As to quaternary structure, heterotrimer composed of an alpha, a beta and a gamma chain.

Functionally, eIF-2 functions in the early steps of protein synthesis by forming a ternary complex with GTP and initiator tRNA. This chain is Translation initiation factor 2 subunit alpha, found in Thermococcus onnurineus (strain NA1).